Reading from the N-terminus, the 190-residue chain is Guanylate kinase (190 aa).

One can recognise a Guanylate kinase-like domain in the interval 3–185 (NYIFIVSAPS…SLEQFCKYFE (183 aa)). 10–17 (APSGAGKS) is a binding site for ATP.

Belongs to the guanylate kinase family.

The protein localises to the cytoplasm. It catalyses the reaction GMP + ATP = GDP + ADP. In terms of biological role, essential for recycling GMP and indirectly, cGMP. This Francisella tularensis subsp. tularensis (strain FSC 198) protein is Guanylate kinase.